The chain runs to 198 residues: Guanine nucleotide-binding protein subunit alpha-11 (198 aa).

Positions 1-11 are G1 motif; the sequence is LLGTGESGKST. Positions 1 to 198 constitute a G-alpha domain; the sequence is LLGTGESGKS…LSEYDHVLVE (198 aa). GTP-binding positions include 3–10 and 137–140; these read GTGESGKS and LRVR. Ser-10 is a binding site for Mg(2+). The segment at 135 to 143 is G2 motif; that stretch reads DVLRVRVPT. Residue Thr-143 coordinates Mg(2+). The interval 158–167 is G3 motif; that stretch reads FRMVDVGGQR.

Belongs to the G-alpha family. G(q) subfamily. G proteins are composed of 3 units; alpha, beta and gamma. The alpha chain contains the guanine nucleotide binding site. Interacts with RGS22. Interacts with NTSR1.

Its subcellular location is the cell membrane. The protein localises to the cytoplasm. It catalyses the reaction GTP + H2O = GDP + phosphate + H(+). Its function is as follows. Guanine nucleotide-binding proteins (G proteins) function as transducers downstream of G protein-coupled receptors (GPCRs) in numerous signaling cascades. The alpha chain contains the guanine nucleotide binding site and alternates between an active, GTP-bound state and an inactive, GDP-bound state. Signaling by an activated GPCR promotes GDP release and GTP binding. The alpha subunit has a low GTPase activity that converts bound GTP to GDP, thereby terminating the signal. Both GDP release and GTP hydrolysis are modulated by numerous regulatory proteins. Signaling is mediated via phospholipase C-beta-dependent inositol lipid hydrolysis for signal propagation: activates phospholipase C-beta: following GPCR activation, GNA11 activates PLC-beta (PLCB1, PLCB2, PLCB3 or PLCB4), leading to production of diacylglycerol (DAG) and inositol 1,4,5-trisphosphate (IP3). Transduces FFAR4 signaling in response to long-chain fatty acids (LCFAs). Together with GNAQ, required for heart development. In the respiratory epithelium, transmits OXGR1-dependent signals that lead to downstream intracellular Ca(2+) release and mucocilliary clearance of airborne pathogens. This Canis lupus familiaris (Dog) protein is Guanine nucleotide-binding protein subunit alpha-11 (GNA11).